We begin with the raw amino-acid sequence, 209 residues long: MGKFQVIDHPLIQHKLTMIREKNCGTKVFREVVNEIAMLMAYEVSRDMPLEDVVIETPMGKSTQKTLSGKKVAIIPILRAGIGMVDGILELIPAAKVGHVGLYRDEETLQPHEYFVKLPEDIASRQLFVVDPMLATGGSAIMAIDSLKERGASNIKFVCLVAVPEGVKALQEAHPDVDIYTAALDERLNEDGYIVPGLGDAGDRLFGTK.

5-phospho-alpha-D-ribose 1-diphosphate is bound by residues R79, R104, and 131–139; that span reads DPMLATGGS. Residues I194 and 199 to 201 contribute to the uracil site; that span reads GDA. D200 serves as a coordination point for 5-phospho-alpha-D-ribose 1-diphosphate.

It belongs to the UPRTase family. Requires Mg(2+) as cofactor.

It catalyses the reaction UMP + diphosphate = 5-phospho-alpha-D-ribose 1-diphosphate + uracil. The protein operates within pyrimidine metabolism; UMP biosynthesis via salvage pathway; UMP from uracil: step 1/1. With respect to regulation, allosterically activated by GTP. Functionally, catalyzes the conversion of uracil and 5-phospho-alpha-D-ribose 1-diphosphate (PRPP) to UMP and diphosphate. The chain is Uracil phosphoribosyltransferase from Enterococcus faecalis (strain ATCC 700802 / V583).